A 67-amino-acid chain; its full sequence is Large ribosomal subunit protein eL38 (67 aa).

The protein belongs to the eukaryotic ribosomal protein eL38 family.

This is Large ribosomal subunit protein eL38 (rpl38e) from Aeropyrum pernix (strain ATCC 700893 / DSM 11879 / JCM 9820 / NBRC 100138 / K1).